Consider the following 146-residue polypeptide: NADH-quinone oxidoreductase subunit A (146 aa).

A run of 3 helical transmembrane segments spans residues isoleucine 4–leucine 24, leucine 63–isoleucine 83, and isoleucine 91–isoleucine 111.

The protein belongs to the complex I subunit 3 family. As to quaternary structure, NDH-1 is composed of 13 different subunits. Subunits NuoA, H, J, K, L, M, N constitute the membrane sector of the complex.

It localises to the cell inner membrane. The catalysed reaction is a quinone + NADH + 5 H(+)(in) = a quinol + NAD(+) + 4 H(+)(out). In terms of biological role, NDH-1 shuttles electrons from NADH, via FMN and iron-sulfur (Fe-S) centers, to quinones in the respiratory chain. The immediate electron acceptor for the enzyme in this species is believed to be ubiquinone. Couples the redox reaction to proton translocation (for every two electrons transferred, four hydrogen ions are translocated across the cytoplasmic membrane), and thus conserves the redox energy in a proton gradient. This chain is NADH-quinone oxidoreductase subunit A, found in Blochmanniella pennsylvanica (strain BPEN).